The chain runs to 573 residues: MTPESRDTTDLSPRGTQEMEGIVVVKVEEEDEEDHFQKQRNKVESSPQVLSRSTTMNERALLSSYLVAYRVAKEKMAHTAAEKIILPACMDMVRTIFDDKSADKLRTIPLSDNTISRRICTIAKHLEAMLITRLQSGIDFAIQLDESTDIASCPTLLVYVRYVWQDDFVEDLLCCLNLNSHITGLDLFTELENCIVGQYKLNWKHCKGISSDGAANMTGKHSRLTEKLLEATHNNALWNHCFIHREALVSKEISPSLMDVLKKAVKIVNFIKGSSLNSRLLEILCSEIGVNHTHLLFHTEVRWLSQGKVLSRVYELRNEIYIFLIEKQSHLANIFENDIWVTKLAYLSDIFGILNELNLKIQGKNNDIFQYLEHILGFQKTLLFWQARLKSNRPSYYMFPTLLQHIEENIINEDCLKEIKLEILLHLTSLSQTFNYYFPEEKFESLKENIWMKDPFAFQNPASIIKLNLEPEEENELLQLSSSFTLKNYYKTLSLSAFWIKIKDEFPLLSRKSISLLLPFTTTYLCELGFSILTRLKTKKRNRLNSAPDMRVALSSCVPDWKELMNRQAHPSH.

Positions 1 to 51 (MTPESRDTTDLSPRGTQEMEGIVVVKVEEEDEEDHFQKQRNKVESSPQVLS) are disordered. The Extracellular segment spans residues 1–513 (MTPESRDTTD…DEFPLLSRKS (513 aa)). Residues 514-533 (ISLLLPFTTTYLCELGFSIL) form a helical membrane-spanning segment. At 534-573 (TRLKTKKRNRLNSAPDMRVALSSCVPDWKELMNRQAHPSH) the chain is on the cytoplasmic side.

Belongs to the FAM200 family.

The protein localises to the membrane. This Macaca fascicularis (Crab-eating macaque) protein is Protein FAM200A (FAM200A).